The chain runs to 461 residues: B3 domain-containing protein REM9 (461 aa).

The segment at residues 11–103 (NQHFFQPLLP…VFHVTALGPS (93 aa)) is a DNA-binding region (TF-B3 1). Residues 110 to 146 (PQSSRHEEGEESGENEISEKEGEENVQKESDKSSSDL) are disordered. Over residues 126 to 143 (ISEKEGEENVQKESDKSS) the composition is skewed to basic and acidic residues. 2 consecutive DNA-binding regions (TF-B3) follow at residues 148 to 244 (CFSQ…CSRT) and 230 to 332 (LQKA…EQPS). A disordered region spans residues 333 to 415 (FKAEDGRHKR…SGIEGNLQHT (83 aa)). Positions 384–394 (PKVEIREKIAE) are enriched in basic and acidic residues. Positions 400–415 (RASNKSSGIEGNLQHT) are enriched in polar residues.

Its subcellular location is the nucleus. The protein is B3 domain-containing protein REM9 (REM9) of Arabidopsis thaliana (Mouse-ear cress).